A 229-amino-acid chain; its full sequence is Flagellar L-ring protein (229 aa).

The first 23 residues, methionine 1–alanine 23, serve as a signal peptide directing secretion. The N-palmitoyl cysteine moiety is linked to residue cysteine 24. Cysteine 24 carries the S-diacylglycerol cysteine lipid modification.

Belongs to the FlgH family. In terms of assembly, the basal body constitutes a major portion of the flagellar organelle and consists of four rings (L,P,S, and M) mounted on a central rod.

The protein localises to the cell outer membrane. The protein resides in the bacterial flagellum basal body. Functionally, assembles around the rod to form the L-ring and probably protects the motor/basal body from shearing forces during rotation. This chain is Flagellar L-ring protein, found in Anaeromyxobacter dehalogenans (strain 2CP-1 / ATCC BAA-258).